A 176-amino-acid chain; its full sequence is 3-hydroxydecanoyl-[acyl-carrier-protein] dehydratase (176 aa).

His75 is a catalytic residue.

This sequence belongs to the thioester dehydratase family. FabA subfamily. Homodimer.

The protein localises to the cytoplasm. It catalyses the reaction a (3R)-hydroxyacyl-[ACP] = a (2E)-enoyl-[ACP] + H2O. The enzyme catalyses (3R)-hydroxydecanoyl-[ACP] = (2E)-decenoyl-[ACP] + H2O. It carries out the reaction (2E)-decenoyl-[ACP] = (3Z)-decenoyl-[ACP]. It participates in lipid metabolism; fatty acid biosynthesis. Functionally, necessary for the introduction of cis unsaturation into fatty acids. Catalyzes the dehydration of (3R)-3-hydroxydecanoyl-ACP to E-(2)-decenoyl-ACP and then its isomerization to Z-(3)-decenoyl-ACP. Can catalyze the dehydratase reaction for beta-hydroxyacyl-ACPs with saturated chain lengths up to 16:0, being most active on intermediate chain length. In Glaesserella parasuis serovar 5 (strain SH0165) (Haemophilus parasuis), this protein is 3-hydroxydecanoyl-[acyl-carrier-protein] dehydratase.